A 403-amino-acid chain; its full sequence is Phosphopentomutase (403 aa).

Residues D13, D298, H303, D339, H340, and H351 each coordinate Mn(2+).

Belongs to the phosphopentomutase family. It depends on Mn(2+) as a cofactor.

It localises to the cytoplasm. It carries out the reaction 2-deoxy-alpha-D-ribose 1-phosphate = 2-deoxy-D-ribose 5-phosphate. It catalyses the reaction alpha-D-ribose 1-phosphate = D-ribose 5-phosphate. The protein operates within carbohydrate degradation; 2-deoxy-D-ribose 1-phosphate degradation; D-glyceraldehyde 3-phosphate and acetaldehyde from 2-deoxy-alpha-D-ribose 1-phosphate: step 1/2. Isomerase that catalyzes the conversion of deoxy-ribose 1-phosphate (dRib-1-P) and ribose 1-phosphate (Rib-1-P) to deoxy-ribose 5-phosphate (dRib-5-P) and ribose 5-phosphate (Rib-5-P), respectively. This is Phosphopentomutase from Streptococcus pyogenes serotype M18 (strain MGAS8232).